The following is a 492-amino-acid chain: Trypanothione reductase (492 aa).

35-52 (DVQTVHGPPFFAALGGTC) contacts FAD. Cysteine 52 and cysteine 57 are joined by a disulfide. Residue histidine 461 is the Proton acceptor of the active site.

The protein belongs to the class-I pyridine nucleotide-disulfide oxidoreductase family. In terms of assembly, homodimer. Requires FAD as cofactor.

It localises to the cytoplasm. The enzyme catalyses trypanothione + NADP(+) = trypanothione disulfide + NADPH + H(+). In terms of biological role, trypanothione is the parasite analog of glutathione; this enzyme is the equivalent of glutathione reductase. The chain is Trypanothione reductase (TPR) from Trypanosoma congolense.